The following is a 520-amino-acid chain: Apolipoprotein N-acyltransferase (520 aa).

7 consecutive transmembrane segments (helical) span residues 12 to 32, 33 to 53, 58 to 78, 93 to 113, 122 to 142, 168 to 188, and 193 to 213; these read IFTYFIAIFSGIIGVLAFSPF, DYWGCAYLSLLGLIFVAKTAE, LWSAFLWGLAFFTFGINWVHV, VLVLVLAAYLALYPMLFAYLI, AMFPVIWTFTEFLRGWLFTGF, VTFFVMWVSAVIFNLLSVLLI, and WNVVIANLLLLTLVGGLSAYS. The 248-residue stretch at 232–479 folds into the CN hydrolase domain; that stretch reads AQGNIEQNLK…ETTLTHKVAA (248 aa). Residue glutamate 272 is the Proton acceptor of the active site. Lysine 338 is an active-site residue. Cysteine 390 (nucleophile) is an active-site residue. The chain crosses the membrane as a helical span at residues 484–504; sequence TPYAVFGNTAIYGLSLLLLLM.

The protein belongs to the CN hydrolase family. Apolipoprotein N-acyltransferase subfamily.

The protein localises to the cell inner membrane. It catalyses the reaction N-terminal S-1,2-diacyl-sn-glyceryl-L-cysteinyl-[lipoprotein] + a glycerophospholipid = N-acyl-S-1,2-diacyl-sn-glyceryl-L-cysteinyl-[lipoprotein] + a 2-acyl-sn-glycero-3-phospholipid + H(+). It functions in the pathway protein modification; lipoprotein biosynthesis (N-acyl transfer). Its function is as follows. Catalyzes the phospholipid dependent N-acylation of the N-terminal cysteine of apolipoprotein, the last step in lipoprotein maturation. In Pasteurella multocida (strain Pm70), this protein is Apolipoprotein N-acyltransferase.